Reading from the N-terminus, the 574-residue chain is Laccase-12 (574 aa).

An N-terminal signal peptide occupies residues 1–27; the sequence is MAAASSVLRCCLLVAALMTLSAMGAEA. Plastocyanin-like domains lie at 35-151 and 161-314; these read DVQT…PPAG and EEVP…YDDP. Asparagine 81 carries N-linked (GlcNAc...) asparagine glycosylation. The Cu cation site is built by histidine 85, histidine 87, histidine 130, and histidine 132. 13 N-linked (GlcNAc...) asparagine glycosylation sites follow: asparagine 173, asparagine 190, asparagine 206, asparagine 242, asparagine 302, asparagine 335, asparagine 342, asparagine 381, asparagine 388, asparagine 398, asparagine 434, asparagine 441, and asparagine 447. The region spanning 424–558 is the Plastocyanin-like 3 domain; sequence NFPYYPLNPF…KMAWLVLDGS (135 aa). 7 residues coordinate Cu cation: histidine 475, histidine 478, histidine 480, histidine 537, cysteine 538, histidine 539, and histidine 543.

It belongs to the multicopper oxidase family. It depends on Cu cation as a cofactor.

The protein resides in the secreted. Its subcellular location is the extracellular space. The protein localises to the apoplast. It catalyses the reaction 4 hydroquinone + O2 = 4 benzosemiquinone + 2 H2O. Its function is as follows. Lignin degradation and detoxification of lignin-derived products. The chain is Laccase-12 (LAC12) from Oryza sativa subsp. japonica (Rice).